The sequence spans 219 residues: UPF0502 protein Gura_0277 (219 aa).

The protein belongs to the UPF0502 family.

The sequence is that of UPF0502 protein Gura_0277 from Geotalea uraniireducens (strain Rf4) (Geobacter uraniireducens).